We begin with the raw amino-acid sequence, 475 residues long: RNA pseudouridine synthase 3, mitochondrial (475 aa).

Residues Met-1 to Leu-15 constitute a mitochondrion transit peptide. The disordered stretch occupies residues Arg-40–Ala-74. In terms of domain architecture, S4 RNA-binding spans Ala-90–Ile-160. Residue Asp-230 is part of the active site.

Belongs to the pseudouridine synthase RluA family.

The protein resides in the mitochondrion. It carries out the reaction a uridine in RNA = a pseudouridine in RNA. This chain is RNA pseudouridine synthase 3, mitochondrial, found in Oryza sativa subsp. japonica (Rice).